The chain runs to 116 residues: UPF0102 protein LBJ_1427 (116 aa).

The protein belongs to the UPF0102 family.

This is UPF0102 protein LBJ_1427 from Leptospira borgpetersenii serovar Hardjo-bovis (strain JB197).